Here is a 693-residue protein sequence, read N- to C-terminus: Zinc finger BED domain-containing protein 5 (693 aa).

Residues 108 to 164 form a BED-type zinc finger; it reads RKYDESYLSFGFTYFGNRDAPHAQCVLCKKILSNSSLAPSKLRRHLETKHAAYKDKD. Zn(2+)-binding residues include cysteine 132, cysteine 135, histidine 152, and histidine 157.

The chain is Zinc finger BED domain-containing protein 5 (ZBED5) from Homo sapiens (Human).